We begin with the raw amino-acid sequence, 121 residues long: Neuromedin-B (121 aa).

The signal sequence occupies residues 1–24 (MARRAGGARMFGSLLLFALLAAGV). The residue at position 56 (methionine 56) is a Methionine amide. The propeptide occupies 60–121 (SLEPSSPSPL…RRLLVQILQK (62 aa)).

This sequence belongs to the bombesin/neuromedin-B/ranatensin family.

Its subcellular location is the secreted. The protein resides in the cell projection. The protein localises to the neuron projection. Functionally, stimulates smooth muscle contraction. Induces sighing by acting directly on the pre-Botzinger complex, a cluster of several thousand neurons in the ventrolateral medulla responsible for inspiration during respiratory activity. Contributes to the induction of sneezing following exposure to chemical irritants or allergens which causes release of NMB by nasal sensory neurons and activation of NMBR-expressing neurons in the sneeze-evoking region of the brainstem. These in turn activate neurons of the caudal ventral respiratory group, giving rise to the sneezing response. Contributes to induction of acute itch, possibly through activation of the NMBR receptor on dorsal root ganglion neurons. Increases expression of NMBR and steroidogenic mediators STAR, CYP11A1 and HSD3B1 in Leydig cells, induces secretion of testosterone by Leydig cells and also promotes Leydig cell proliferation. Plays a role in the innate immune response to influenza A virus infection by enhancing interferon alpha expression and reducing expression of IL6. Plays a role in CSF1-induced proliferation of osteoclast precursors by contributing to the positive regulation of the expression of the CSF1 receptor CSF1R. The chain is Neuromedin-B (NMB) from Homo sapiens (Human).